The chain runs to 2167 residues: GTPase-activating protein BEM2/IPL2 (2167 aa).

Disordered stretches follow at residues 1-209 (MKGL…NDNE), 243-305 (TNYN…ASAR), and 353-372 (NSSIANENHQQKKQQTNNQA). Over residues 12 to 51 (SSTASASSSSTSTSHKTTTASTASSSSPSSSSQTIRNSTS) the composition is skewed to low complexity. K27 is covalently cross-linked (Glycyl lysine isopeptide (Lys-Gly) (interchain with G-Cter in ubiquitin)). The span at 58–70 (HSHHHHGQGHSHH) shows a compositional bias: basic residues. Over residues 89–118 (KQYTSTSSSQVNLGMYHSDTNTRSSRSIAS) the composition is skewed to polar residues. S129 bears the Phosphoserine mark. Positions 134–145 (SNSSSQKSNAQD) are enriched in polar residues. 2 stretches are compositionally biased toward low complexity: residues 160–177 (SLLPSRSSSLSPPQSRCS) and 187–207 (NTSGISNSSGTNNNNSNNNND). The segment covering 243 to 252 (TNYNSSMTAP) has biased composition (polar residues). Residue S283 is modified to Phosphoserine. Residues 289–300 (SSSTTATNSGND) are compositionally biased toward low complexity. In terms of domain architecture, Ras-GEF spans 592-859 (DITTLADEVH…MKLSVQHEPP (268 aa)). Residues S1012 and S1016 each carry the phosphoserine modification. T1038 carries the post-translational modification Phosphothreonine. Phosphoserine is present on residues S1046, S1054, and S1128. Residues 1771-1794 (ISGTHSDNDHSYNINKNTGQTPSL) show a composition bias toward polar residues. The tract at residues 1771–1828 (ISGTHSDNDHSYNINKNTGQTPSLGSVMESNNSARNRRDSRASFSTNRSSVVSNSSHN) is disordered. The span at 1812–1828 (ASFSTNRSSVVSNSSHN) shows a compositional bias: low complexity. Residues 1846–1948 (GFNTSSSNYS…WIKMIKASKR (103 aa)) enclose the PH domain. A Rho-GAP domain is found at 1967 to 2165 (VPLEDVCERE…DFIKNPNDYF (199 aa)).

Its function is as follows. GTPase-activating protein (GAP) for RHO1 and RHO2. Involved in the control of cellular morphogenesis. Required for proper bud site selection and bud emergence. The chain is GTPase-activating protein BEM2/IPL2 (BEM2) from Saccharomyces cerevisiae (strain ATCC 204508 / S288c) (Baker's yeast).